The sequence spans 613 residues: Chaperone protein DnaK (613 aa).

At Thr173 the chain carries Phosphothreonine; by autocatalysis. The disordered stretch occupies residues 577 to 613; it reads AKQAQAQQEGGAEGAQKADDNVVDAEYEEVNDDQEKK. The span at 597–613 shows a compositional bias: acidic residues; that stretch reads NVVDAEYEEVNDDQEKK.

Belongs to the heat shock protein 70 family.

Functionally, acts as a chaperone. The sequence is that of Chaperone protein DnaK from Bacillus pumilus (strain SAFR-032).